Reading from the N-terminus, the 321-residue chain is Basic endochitinase A (321 aa).

The N-terminal stretch at Met1 to Ala19 is a signal peptide. The region spanning Glu20–Gly60 is the Chitin-binding type-1 domain. 5 cysteine pairs are disulfide-bonded: Cys22–Cys37, Cys31–Cys43, Cys34–Cys61, Cys36–Cys50, and Cys54–Cys58. Positions Gly62–Gly79 are hinge region (Gly/Pro/Thr-rich). The tract at residues Val80–Ala321 is catalytic. Cystine bridges form between Cys101/Cys163, Cys175/Cys183, and Cys301/Cys314. Glu145 acts as the Proton donor in catalysis.

It belongs to the glycosyl hydrolase 19 family. Chitinase class I subfamily. Localized in the aleurone cells of the seed endosperm (at protein level).

It catalyses the reaction Random endo-hydrolysis of N-acetyl-beta-D-glucosaminide (1-&gt;4)-beta-linkages in chitin and chitodextrins.. Functionally, defense against chitin-containing fungal pathogens. Binds the hyphal tips, lateral walls and septa of fungi and degrades mature chitin. This Secale cereale (Rye) protein is Basic endochitinase A.